Consider the following 430-residue polypeptide: Glutamate-1-semialdehyde 2,1-aminomutase (430 aa).

N6-(pyridoxal phosphate)lysine is present on Lys-270.

This sequence belongs to the class-III pyridoxal-phosphate-dependent aminotransferase family. HemL subfamily. As to quaternary structure, homodimer. It depends on pyridoxal 5'-phosphate as a cofactor.

Its subcellular location is the cytoplasm. The catalysed reaction is (S)-4-amino-5-oxopentanoate = 5-aminolevulinate. Its pathway is porphyrin-containing compound metabolism; protoporphyrin-IX biosynthesis; 5-aminolevulinate from L-glutamyl-tRNA(Glu): step 2/2. The protein is Glutamate-1-semialdehyde 2,1-aminomutase of Cupriavidus metallidurans (strain ATCC 43123 / DSM 2839 / NBRC 102507 / CH34) (Ralstonia metallidurans).